The primary structure comprises 218 residues: Cytochrome c biogenesis ATP-binding export protein CcmA (218 aa).

The ABC transporter domain occupies 12-217; it reads LHAEQLSSIR…KLSLEYRGEV (206 aa). 44 to 51 contacts ATP; it reads GPNGAGKS.

The protein belongs to the ABC transporter superfamily. CcmA exporter (TC 3.A.1.107) family. In terms of assembly, the complex is composed of two ATP-binding proteins (CcmA) and two transmembrane proteins (CcmB).

The protein resides in the cell inner membrane. The catalysed reaction is heme b(in) + ATP + H2O = heme b(out) + ADP + phosphate + H(+). Functionally, part of the ABC transporter complex CcmAB involved in the biogenesis of c-type cytochromes; once thought to export heme, this seems not to be the case, but its exact role is uncertain. Responsible for energy coupling to the transport system. The sequence is that of Cytochrome c biogenesis ATP-binding export protein CcmA from Idiomarina loihiensis (strain ATCC BAA-735 / DSM 15497 / L2-TR).